Reading from the N-terminus, the 304-residue chain is Acetylglutamate kinase (304 aa).

Substrate-binding positions include 72-73, Arg94, and Asn199; that span reads GG.

This sequence belongs to the acetylglutamate kinase family. ArgB subfamily.

It is found in the cytoplasm. It catalyses the reaction N-acetyl-L-glutamate + ATP = N-acetyl-L-glutamyl 5-phosphate + ADP. It functions in the pathway amino-acid biosynthesis; L-arginine biosynthesis; N(2)-acetyl-L-ornithine from L-glutamate: step 2/4. Its function is as follows. Catalyzes the ATP-dependent phosphorylation of N-acetyl-L-glutamate. This chain is Acetylglutamate kinase, found in Methylobacterium nodulans (strain LMG 21967 / CNCM I-2342 / ORS 2060).